The primary structure comprises 314 residues: Glutathione synthetase (314 aa).

One can recognise an ATP-grasp domain in the interval 125-309; that stretch reads KLFVMNFPQL…VAAKVWDTIE (185 aa). Residue 151 to 207 coordinates ATP; that stretch reads RDKHGAVVMKPLHGHGGAAVFRVMPQDMNFGSLFDMFTVTFKEPWVIQQFIPEVKHG. E280 and N282 together coordinate Mg(2+).

It belongs to the prokaryotic GSH synthase family. The cofactor is Mg(2+). Requires Mn(2+) as cofactor.

It catalyses the reaction gamma-L-glutamyl-L-cysteine + glycine + ATP = glutathione + ADP + phosphate + H(+). It participates in sulfur metabolism; glutathione biosynthesis; glutathione from L-cysteine and L-glutamate: step 2/2. The polypeptide is Glutathione synthetase (Bradyrhizobium diazoefficiens (strain JCM 10833 / BCRC 13528 / IAM 13628 / NBRC 14792 / USDA 110)).